A 447-amino-acid polypeptide reads, in one-letter code: Membrane metalloprotease ARASP, chloroplastic (447 aa).

The N-terminal 73 residues, 1–73 (MLLNISSSPI…YPDGERFDFR (73 aa)), are a transit peptide targeting the chloroplast. His102 is a Zn(2+) binding site. Glu103 is an active-site residue. His106 lines the Zn(2+) pocket. A helical transmembrane segment spans residues 177-197 (SIVVSAGIIANVIFAYAIIFV). Positions 202 to 244 (VGLPVQEAFPGVLVPEVKTFSAASRDGLLSGDVILAVDGTELS) constitute a PDZ domain. Transmembrane regions (helical) follow at residues 379 to 399 (LAVINLLPLPALDGGTLALIL) and 413 to 433 (VEQGIMSSGIMLVIFLGLFLI).

Belongs to the peptidase M50A family. Requires Zn(2+) as cofactor. As to expression, expressed in green seedlings and cotyledons. Low levels of expression in roots, siliques and seeds.

Its subcellular location is the plastid. It localises to the chloroplast inner membrane. Its function is as follows. Metalloprotease essential for chloroplast and plant development. May be involved in regulated intramembrane proteolysis (RIP). The polypeptide is Membrane metalloprotease ARASP, chloroplastic (Arabidopsis thaliana (Mouse-ear cress)).